We begin with the raw amino-acid sequence, 213 residues long: Thymidine kinase (213 aa).

Residues 20–27 (GPMFSGKT) and 93–96 (DEAQ) contribute to the ATP site. The active-site Proton acceptor is Glu94. Positions 150, 153, 185, and 188 each coordinate Zn(2+).

Belongs to the thymidine kinase family. As to quaternary structure, homotetramer.

Its subcellular location is the cytoplasm. The enzyme catalyses thymidine + ATP = dTMP + ADP + H(+). This chain is Thymidine kinase, found in Mycoplasma genitalium (strain ATCC 33530 / DSM 19775 / NCTC 10195 / G37) (Mycoplasmoides genitalium).